Consider the following 223-residue polypeptide: Sigma non-opioid intracellular receptor 1 (223 aa).

The Lumenal segment spans residues 1-9; it reads MPWAAGRRW. Positions 2-8 are targeting to endoplasmic reticulum-associated lipid droplets; the sequence is PWAAGRR. A helical membrane pass occupies residues 10–30; sequence AWITLILTIIAVLIQAAWLWL. Topologically, residues 31-223 are cytoplasmic; sequence GTQNFVFSRE…LTTYLFGQDS (193 aa). The segment at 99–106 is important for ligand-binding; that stretch reads SLSEYVLL. The interval 177-223 is C-terminal hydrophobic region; sequence VIPSTLFFALADTFFSTQDYLTLFYTLRAYARGLRLELTTYLFGQDS.

This sequence belongs to the ERG2 family. As to quaternary structure, homotrimer. Interacts with KCNA4. Interacts with KCNA2; cocaine consumption leads to increased interaction. Forms a ternary complex with ANK2 and ITPR3. The complex is disrupted by agonists. Interacts with RNF112 in an oxidative stress-regulated manner. In terms of tissue distribution, widely expressed with higher expression in liver, brain, kidney and thymus. Expressed throughout the brain with higher expression within cerebral cortex, hippocampus and cerebellum. Within the hippocampus expressed in cornu ammonis pyramidal neurons, the granular cells of the dentate gyrus as well as interneurons. Within the cerebellum, expressed in Purkinje cell bodies. Highly expressed in the brainstem and motor neurons of the spinal cord. Expressed by neural retina, retinal pigment epithelial cells and lens.

It localises to the nucleus inner membrane. It is found in the nucleus outer membrane. Its subcellular location is the nucleus envelope. The protein localises to the cytoplasmic vesicle. The protein resides in the endoplasmic reticulum membrane. It localises to the membrane. It is found in the lipid droplet. Its subcellular location is the cell junction. The protein localises to the cell membrane. The protein resides in the cell projection. It localises to the growth cone. It is found in the postsynaptic density membrane. Functionally, functions in lipid transport from the endoplasmic reticulum and is involved in a wide array of cellular functions probably through regulation of the biogenesis of lipid microdomains at the plasma membrane. Involved in the regulation of different receptors it plays a role in BDNF signaling and EGF signaling. Also regulates ion channels like the potassium channel and could modulate neurotransmitter release. Plays a role in calcium signaling through modulation together with ANK2 of the ITP3R-dependent calcium efflux at the endoplasmic reticulum. Plays a role in several other cell functions including proliferation, survival and death. Originally identified for its ability to bind various psychoactive drugs it is involved in learning processes, memory and mood alteration. Necessary for proper mitochondrial axonal transport in motor neurons, in particular the retrograde movement of mitochondria. Plays a role in protecting cells against oxidative stress-induced cell death via its interaction with RNF112. This is Sigma non-opioid intracellular receptor 1 (Sigmar1) from Mus musculus (Mouse).